The sequence spans 589 residues: Cytoplasmic polyadenylation element-binding protein 2 (589 aa).

2 disordered regions span residues 1-103 and 118-140; these read MPPP…QAAA and PLLK…SMSW. Over residues 24 to 33 the composition is skewed to low complexity; that stretch reads FFPSFSPVSP. A compositionally biased stretch (gly residues) spans 44 to 53; it reads SGGGGGGFGG. Positions 60 to 81 are enriched in pro residues; that stretch reads VPPPPPPAMNIPQQQPPPPAAP. 2 stretches are compositionally biased toward low complexity: residues 82 to 103 and 130 to 140; these read QQPQ…QAAA and SSGWGTGSMSW. S89 carries the post-translational modification Phosphoserine. 2 consecutive RRM domains span residues 332 to 423 and 440 to 522; these read RKVF…PWNL and KTIF…PYVL.

It belongs to the RRM CPEB family. As to quaternary structure, interacts with TENT2/GLD2.

It is found in the cytoplasm. Functionally, may play a role in translational regulation of stored mRNAs in transcriptionally inactive haploid spermatids. Binds to poly(U) RNA oligomers. Required for cell cycle progression, specifically for the transition from metaphase to anaphase. This is Cytoplasmic polyadenylation element-binding protein 2 (CPEB2) from Homo sapiens (Human).